The chain runs to 129 residues: MRHRKSGRQLNRNSSHRQAMFRNMAGSLVRHEIIKTTLPKAKELRRVVEPLITLAKTDSVANRRLAFARTRDNEIVAKLFNELGPRFASRAGGYTRILKCGFRAGDNAPMAYIELVDRAASQAEVVAAE.

This sequence belongs to the bacterial ribosomal protein bL17 family. As to quaternary structure, part of the 50S ribosomal subunit. Contacts protein L32.

The protein is Large ribosomal subunit protein bL17 of Yersinia enterocolitica serotype O:8 / biotype 1B (strain NCTC 13174 / 8081).